Consider the following 348-residue polypeptide: Dihydroorotate dehydrogenase (quinone) (348 aa).

FMN-binding positions include 60–64 (AGLDK) and Thr-84. Position 64 (Lys-64) interacts with substrate. 109–113 (NRMGF) is a substrate binding site. FMN-binding residues include Asn-137 and Asn-170. Residue Asn-170 coordinates substrate. Catalysis depends on Ser-173, which acts as the Nucleophile. Asn-175 serves as a coordination point for substrate. FMN-binding residues include Lys-215 and Thr-243. A substrate-binding site is contributed by 244–245 (NT). Residues Gly-266, Gly-295, and 316–317 (YS) each bind FMN.

It belongs to the dihydroorotate dehydrogenase family. Type 2 subfamily. Monomer. It depends on FMN as a cofactor.

The protein resides in the cell membrane. The enzyme catalyses (S)-dihydroorotate + a quinone = orotate + a quinol. The protein operates within pyrimidine metabolism; UMP biosynthesis via de novo pathway; orotate from (S)-dihydroorotate (quinone route): step 1/1. Catalyzes the conversion of dihydroorotate to orotate with quinone as electron acceptor. The protein is Dihydroorotate dehydrogenase (quinone) of Nitrosospira multiformis (strain ATCC 25196 / NCIMB 11849 / C 71).